We begin with the raw amino-acid sequence, 197 residues long: Nucleoid occlusion factor SlmA (197 aa).

Residues 7–67 enclose the HTH tetR-type domain; it reads INRREHILQC…GLIDFIEESL (61 aa). The segment at residues 30 to 49 is a DNA-binding region (H-T-H motif); sequence TTAKLAAEVGVSEAALYRHF.

This sequence belongs to the nucleoid occlusion factor SlmA family. As to quaternary structure, homodimer. Interacts with FtsZ.

The protein localises to the cytoplasm. Its subcellular location is the nucleoid. Its function is as follows. Required for nucleoid occlusion (NO) phenomenon, which prevents Z-ring formation and cell division over the nucleoid. Acts as a DNA-associated cell division inhibitor that binds simultaneously chromosomal DNA and FtsZ, and disrupts the assembly of FtsZ polymers. SlmA-DNA-binding sequences (SBS) are dispersed on non-Ter regions of the chromosome, preventing FtsZ polymerization at these regions. The sequence is that of Nucleoid occlusion factor SlmA from Shewanella sediminis (strain HAW-EB3).